We begin with the raw amino-acid sequence, 98 residues long: Molybdopterin synthase sulfur carrier subunit (98 aa).

Glycine 98 carries the 1-thioglycine; alternate modification. Glycine 98 carries the glycyl adenylate; alternate modification.

This sequence belongs to the MoaD family. MOCS2A subfamily. In terms of assembly, heterotetramer; composed of 2 small (MOCS2A) and 2 large (MOCS2B) subunits. Post-translationally, C-terminal thiocarboxylation occurs in 2 steps, it is first acyl-adenylated (-COAMP) via the hesA/moeB/thiF part of MOCS3, then thiocarboxylated (-COSH) via the rhodanese domain of MOCS3.

The protein localises to the cytoplasm. The protein operates within cofactor biosynthesis; molybdopterin biosynthesis. Acts as a sulfur carrier required for molybdopterin biosynthesis. Component of the molybdopterin synthase complex that catalyzes the conversion of precursor Z into molybdopterin by mediating the incorporation of 2 sulfur atoms into precursor Z to generate a dithiolene group. In the complex, serves as sulfur donor by being thiocarboxylated (-COSH) at its C-terminus by MOCS3. After interaction with MOCS2B, the sulfur is then transferred to precursor Z to form molybdopterin. This chain is Molybdopterin synthase sulfur carrier subunit, found in Aedes aegypti (Yellowfever mosquito).